Consider the following 291-residue polypeptide: Methionine aminopeptidase (291 aa).

Position 118 (His-118) interacts with substrate. Residues Asp-135, Asp-146, and His-209 each coordinate a divalent metal cation. His-216 contributes to the substrate binding site. The a divalent metal cation site is built by Glu-241 and Glu-273.

This sequence belongs to the peptidase M24A family. Methionine aminopeptidase type 1 subfamily. In terms of assembly, monomer. Requires Co(2+) as cofactor. Zn(2+) serves as cofactor. Mn(2+) is required as a cofactor. The cofactor is Fe(2+).

The catalysed reaction is Release of N-terminal amino acids, preferentially methionine, from peptides and arylamides.. Functionally, removes the N-terminal methionine from nascent proteins. The N-terminal methionine is often cleaved when the second residue in the primary sequence is small and uncharged (Met-Ala-, Cys, Gly, Pro, Ser, Thr, or Val). Requires deformylation of the N(alpha)-formylated initiator methionine before it can be hydrolyzed. This is Methionine aminopeptidase from Chlamydia pneumoniae (Chlamydophila pneumoniae).